We begin with the raw amino-acid sequence, 142 residues long: Transcriptional regulator MraZ (142 aa).

2 SpoVT-AbrB domains span residues 5–51 (ASAL…PRPE) and 77–120 (AMDV…DSQT).

It belongs to the MraZ family. As to quaternary structure, forms oligomers.

It localises to the cytoplasm. The protein localises to the nucleoid. This chain is Transcriptional regulator MraZ, found in Burkholderia cenocepacia (strain HI2424).